The chain runs to 587 residues: Barrierpepsin (587 aa).

The first 24 residues, 1 to 24, serve as a signal peptide directing secretion; the sequence is MSAINHLCLKLILASFAIINTITA. One can recognise a Peptidase A1 domain in the interval 45–393; it reads YATTLDIGTP…DLDNYKISLA (349 aa). Aspartate 63 is a catalytic residue. Residues asparagine 84, asparagine 90, and asparagine 268 are each glycosylated (N-linked (GlcNAc...) asparagine). Residue aspartate 287 is part of the active site. Asparagine 308 carries N-linked (GlcNAc...) asparagine glycosylation. Cysteine 322 and cysteine 358 form a disulfide bridge. Asparagine 366, asparagine 398, asparagine 468, asparagine 503, and asparagine 551 each carry an N-linked (GlcNAc...) asparagine glycan. The tract at residues 466–505 is disordered; it reads SRNCSTKMPGTRSTTVLSKPTQNSAMHQSTGAVTQTSNET.

The protein belongs to the peptidase A1 family.

It localises to the secreted. The enzyme catalyses Selective cleavage of 6-Leu-|-Lys-7 bond in the pheromone alpha-mating factor.. Functionally, this protein called 'barrier activity' is excreted by yeast cells mating type a. It is probably a protease that cleaves alpha-factor and thus acts as an antagonist of this mating pheromone and establishes optimal pheromone concentration for conjugation. This is Barrierpepsin (BAR1) from Saccharomyces cerevisiae (strain ATCC 204508 / S288c) (Baker's yeast).